Here is a 322-residue protein sequence, read N- to C-terminus: Malate dehydrogenase (322 aa).

NAD(+) is bound by residues 10–15 (GSGQIG) and Asp34. The substrate site is built by Arg83 and Arg89. NAD(+) is bound by residues Asn96 and 119 to 121 (ITN). Positions 121 and 152 each coordinate substrate. His176 serves as the catalytic Proton acceptor.

It belongs to the LDH/MDH superfamily. MDH type 3 family.

It catalyses the reaction (S)-malate + NAD(+) = oxaloacetate + NADH + H(+). Catalyzes the reversible oxidation of malate to oxaloacetate. This is Malate dehydrogenase from Bradyrhizobium sp. (strain BTAi1 / ATCC BAA-1182).